A 324-amino-acid chain; its full sequence is Protein SRC2 homolog (324 aa).

Positions 1–111 (MECRSLDLTI…LDQNKGDEEK (111 aa)) constitute a C2 domain. The Cytoplasmic portion of the chain corresponds to 1–279 (MECRSLDLTI…KPQKPKKHGK (279 aa)). The segment at 141-281 (GSSSGPHAPV…QKPKKHGKAG (141 aa)) is disordered. 2 stretches are compositionally biased toward low complexity: residues 166-175 (YPPGHGAPSA) and 246-269 (PYGY…QAHG). Basic residues predominate over residues 270 to 279 (KPQKPKKHGK). Residues 280-300 (AGAGMGLGLGLGAGLLGGLLV) traverse the membrane as a helical; Signal-anchor segment. The Lumenal portion of the chain corresponds to 301–324 (GEAVSDIADMGDMGDMGDMGGFDF).

In terms of assembly, interacts with RBOHF (via N-terminus).

It localises to the endoplasmic reticulum membrane. The protein resides in the protein storage vacuole membrane. Its subcellular location is the cell membrane. In terms of biological role, may act as an activator of the calcium-dependent activation of RBOHF that mediates reactive oxygen species (ROS) production and may play a role in cold responses. This is Protein SRC2 homolog from Arabidopsis thaliana (Mouse-ear cress).